A 205-amino-acid polypeptide reads, in one-letter code: Protein DEPP1 (205 aa).

2 stretches are compositionally biased toward polar residues: residues 55–64 and 83–101; these read DKVTAQSRPN and GDSS…SPGT. The segment at 55 to 171 is disordered; the sequence is DKVTAQSRPN…RHQTSDLKSW (117 aa). The span at 138–155 shows a compositional bias: basic and acidic residues; that stretch reads MGKDTGRLCEARVPEHSL.

Its subcellular location is the cytoplasm. It localises to the peroxisome. The protein localises to the mitochondrion. In terms of biological role, acts as a critical modulator of FOXO3-induced autophagy via increased cellular ROS. This Mus musculus (Mouse) protein is Protein DEPP1 (Depp1).